The chain runs to 735 residues: Transmembrane channel-like protein 7 (735 aa).

The Extracellular portion of the chain corresponds to 1–164; that stretch reads MSEFGAGAEL…QSYFSFLRFL (164 aa). Residues 165-185 form a helical membrane-spanning segment; sequence VLLNFLMFILMFSFVTLPAVI. Topologically, residues 186–233 are cytoplasmic; that stretch reads SNYGIFNSSSTKISPNNTEPYCTVYTPSGNKGLVYFYTYLKDLLTGTG. A helical transmembrane segment spans residues 234–254; it reads FLEVTVLFYGYYTIDAAWFSV. The Extracellular portion of the chain corresponds to 255–258; the sequence is LRYN. The chain crosses the membrane as a helical span at residues 259-279; it reads LPLAYLLTTFAYLALSFVWII. Topologically, residues 280–355 are cytoplasmic; sequence KRSVERFRQH…TMKEKLQIYS (76 aa). The chain crosses the membrane as a helical span at residues 356 to 376; the sequence is LRIFINIIVIAVLSGCFYSIY. At 377–403 the chain is on the extracellular side; that stretch reads RATVFSQENSSVSIRRNVMIANLLVQY. An N-linked (GlcNAc...) asparagine glycan is attached at N385. The chain crosses the membrane as a helical span at residues 404–424; it reads LPSIVITSANFIAPQIFSFLI. The Cytoplasmic portion of the chain corresponds to 425–436; it reads RFEDYSAAFEIR. The helical transmembrane segment at 437-457 threads the bilayer; the sequence is LTLIRCVFVRLANVGVLLFSL. The Extracellular portion of the chain corresponds to 458–488; sequence WSQIHCDNDQCKACGYDYELYPCWESAVGQE. A helical membrane pass occupies residues 489–509; that stretch reads MYKLLIFDFMIIIAMTLFVDF. At 510–548 the chain is on the cytoplasmic side; that stretch reads PRKLLVTYCSWKLVQWWGLQEFGISDNVLEIIYGQTICW. Residues 549 to 569 form a helical membrane-spanning segment; it reads IGTFFSPLLPAIATIKYFIIF. Over 570–594 the chain is Extracellular; the sequence is YIKKISLIHTRKPASRPIRASSSNF. Residues 595-615 traverse the membrane as a helical segment; that stretch reads FFLAVLLIGLILAFVPLGVSI. At 616-634 the chain is on the cytoplasmic side; it reads ALISSSKACGPFRNFNTSW. A helical transmembrane segment spans residues 635-655; sequence AIVPYTILEFPIGLQKFLYGI. At 656–658 the chain is on the extracellular side; it reads ASE. The helical transmembrane segment at 659 to 679 threads the bilayer; the sequence is AFAVPFFVIACLFMFYFIALA. Topologically, residues 680–735 are cytoplasmic; the sequence is GAHKRVVEQLREQLVTESRDKLFLLEKLSEAQKNSGKPQKARKLTSSWLLEPLDKG. Residues 710-735 form a disordered region; it reads AQKNSGKPQKARKLTSSWLLEPLDKG.

The protein belongs to the TMC family.

Its subcellular location is the membrane. Its function is as follows. Probable component of an ion channel. The protein is Transmembrane channel-like protein 7 (Tmc7) of Gallus gallus (Chicken).